The following is a 228-amino-acid chain: MASTASEIIAFMVSISGWVLVSSTLPTDYWKVSTIDGTVITTATYWANLWKACVTDSTGVSNCKDFPSMLALDGYIQACRGLMIAAVSLGFFGSIFALFGMKCTKVGGSDKAKAKIACLAGIVFILSGLCSMTGCSLYANKITTEFFDPLFVEQKYELGAALFIGWAGASLCIIGGVIFCFSISDNNKTPRYAYNGATSVMSSRTKYHGGEDFKTTNPSKQFDKNAYV.

The chain crosses the membrane as a helical span at residues 1-21 (MASTASEIIAFMVSISGWVLV). At 22 to 80 (SSTLPTDYWKVSTIDGTVITTATYWANLWKACVTDSTGVSNCKDFPSMLALDGYIQACR) the chain is on the extracellular side. Residues 81–101 (GLMIAAVSLGFFGSIFALFGM) form a helical membrane-spanning segment. Topologically, residues 102–115 (KCTKVGGSDKAKAK) are cytoplasmic. The helical transmembrane segment at 116-136 (IACLAGIVFILSGLCSMTGCS) threads the bilayer. At 137 to 160 (LYANKITTEFFDPLFVEQKYELGA) the chain is on the extracellular side. Residues 161–181 (ALFIGWAGASLCIIGGVIFCF) form a helical membrane-spanning segment. At 182–228 (SISDNNKTPRYAYNGATSVMSSRTKYHGGEDFKTTNPSKQFDKNAYV) the chain is on the cytoplasmic side.

It belongs to the claudin family. In terms of assembly, can form homodimers both in trans (interaction between CLDN10 molecules in opposing membranes) and in cis (interaction between CLDN10 molecules within one membrane). Interacts with CLDN19.

Its subcellular location is the cell junction. The protein localises to the tight junction. It is found in the cell membrane. The enzyme catalyses Na(+)(in) = Na(+)(out). It carries out the reaction Li(+)(in) = Li(+)(out). The catalysed reaction is K(+)(in) = K(+)(out). It catalyses the reaction Rb(+)(in) = Rb(+)(out). The enzyme catalyses Cs(+)(in) = Cs(+)(out). It carries out the reaction NH4(+)(in) = NH4(+)(out). The catalysed reaction is methylamine(out) = methylamine(in). It catalyses the reaction Mg(2+)(in) = Mg(2+)(out). The enzyme catalyses Ca(2+)(in) = Ca(2+)(out). It carries out the reaction Sr(2+)(in) = Sr(2+)(out). The catalysed reaction is chloride(in) = chloride(out). It catalyses the reaction nitrate(in) = nitrate(out). Functionally, forms paracellular channels: polymerizes in tight junction strands with cation- and anion-selective channels through the strands, conveying epithelial permeability in a process known as paracellular tight junction permeability. In sweat glands and in the thick ascending limb (TAL) of Henle's loop in kidney, it controls paracellular sodium permeability which is essential for proper sweat production and renal function. In renal proximal tubules, it conveys selective chloride over hydrogencarbonate anion permeability which is required for renal chloride reabsorption and salt homeostasis. The sequence is that of Claudin-10 (CLDN10) from Pongo abelii (Sumatran orangutan).